A 666-amino-acid chain; its full sequence is Neurexin-2-beta (666 aa).

A compositionally biased stretch (gly residues) spans 1–10; sequence MPPGGSGPGG. A disordered region spans residues 1–30; that stretch reads MPPGGSGPGGCPRRPPALAGPLPPPPPPPP. The N-terminal stretch at 1–50 is a signal peptide; sequence MPPGGSGPGGCPRRPPALAGPLPPPPPPPPPPLLPLLPLLLLLLLGAAEG. Residues 21 to 30 are compositionally biased toward pro residues; the sequence is PLPPPPPPPP. Topologically, residues 51-590 are extracellular; the sequence is ARVSSSLSTT…EVIRESSSTT (540 aa). The Laminin G-like domain maps to 91 to 299; it reads TTYIFGKGGA…HLRLVGEGPS (209 aa). Residues Asp-143 and Val-160 each contribute to the Ca(2+) site. Asn-190 carries N-linked (GlcNAc...) asparagine glycosylation. Residues Ile-242 and Asn-244 each coordinate Ca(2+). Residues 327 to 346 are disordered; it reads ATTTTRRGRSPTLRDSTTQN. A glycan (O-linked (Xyl...) (heparan sulfate) serine) is linked at Ser-354. Disordered regions lie at residues 412-443 and 479-580; these read ATQD…CEEP and TLLS…PGAV. Residues 591–611 traverse the membrane as a helical segment; that stretch reads GMVVGIVAAAALCILILLYAM. The Cytoplasmic segment spans residues 612 to 666; that stretch reads YKYRNRDEGSYQVDQSRNYISNSAQSNGAVVKEKAPAAPKTPSKAKKNKDKEYYV. The tract at residues 633-666 is disordered; sequence NSAQSNGAVVKEKAPAAPKTPSKAKKNKDKEYYV.

It belongs to the neurexin family. In terms of assembly, interacts (via cytoplasmic C-terminal region) with CASK. Specific isoforms bind alpha-dystroglycan and neuroligins NLGN1, NLGN2 and NLGN3. Interacts with CBLN1, CBLN2 and, less avidly, with CBLN4. Interacts with CLSTN3. Post-translationally, O-glycosylated; contains heparan sulfate. Heparan sulfate attachment is required for synapse development by mediating interactions with neuroligins.

It is found in the presynaptic cell membrane. Functionally, neuronal cell surface protein that may be involved in cell recognition and cell adhesion. In Homo sapiens (Human), this protein is Neurexin-2-beta (NRXN2).